Reading from the N-terminus, the 50-residue chain is Protein PsbN (50 aa).

Residues 14-34 (IAVTILAILLALTGFGLWSAF) traverse the membrane as a helical segment.

Belongs to the PsbN family.

The protein resides in the cellular thylakoid membrane. May play a role in photosystem I and II biogenesis. In Prochlorococcus marinus (strain MIT 9215), this protein is Protein PsbN.